The sequence spans 2035 residues: Ral GTPase-activating protein subunit alpha-1 (2035 aa).

The segment at 343–384 (LVSREESKNDTVDKADKTAEPEQSHSNTSTLTEREPSSSSLC) is disordered. A compositionally biased stretch (basic and acidic residues) spans 345-365 (SREESKNDTVDKADKTAEPEQ). Positions 366-384 (SHSNTSTLTEREPSSSSLC) are enriched in polar residues. Phosphoserine occurs at positions 710 and 720. The disordered stretch occupies residues 714–754 (SFSRGWSRDQPGQAPMRQRSATTTGSPGTEKARSIVRQKTV). Thr-753 is subject to Phosphothreonine. Ser-772 carries the phosphoserine modification. Position 777 is a phosphothreonine (Thr-777). Position 796 is a phosphoserine (Ser-796). The segment covering 807–817 (ERAKVNKEDTS) has biased composition (basic and acidic residues). Disordered stretches follow at residues 807 to 834 (ERAK…SANV) and 848 to 911 (SGNA…SHSD). 2 stretches are compositionally biased toward polar residues: residues 824-833 (NSETGGSSAN) and 849-862 (GNAS…SSPG). Phosphoserine occurs at positions 859, 860, and 863. The segment covering 894-911 (SPASAGSSDLMSSDSHSD) has biased composition (low complexity). 4 positions are modified to phosphoserine: Ser-985, Ser-989, Ser-993, and Ser-999. The interval 986–1008 (ESASPVHSALGSRSQTPSPSTLN) is disordered. Residue Thr-1001 is modified to Phosphothreonine. A phosphoserine mark is found at Ser-1003 and Ser-1477. The segment at 1326-2034 (FTNKTVAHVA…PYHHFPADAD (709 aa)) is minimal domain that binds to TCF3/E12. Positions 1713–1746 (SEKQENDVINAILKQYTEEKEFVEKHFNDLNMKA) form a coiled coil. A Rap-GAP domain is found at 1795–2003 (LRNLDSRQCR…EERARYLQTI (209 aa)).

In terms of assembly, component of the heterodimeric RalGAP1 complex with RALGAPB. Heterodimerization is required for activity. Interacts with the HLH region of TCF3/isoform E12. As to expression, highly expressed in brain, thymus and testis with lower levels in lung and spleen and barely detectable in heart or liver (at protein level).

It localises to the cytoplasm. It is found in the nucleus. Functionally, catalytic subunit of the heterodimeric RalGAP1 complex which acts as a GTPase activator for the Ras-like small GTPases RALA and RALB. The polypeptide is Ral GTPase-activating protein subunit alpha-1 (Ralgapa1) (Rattus norvegicus (Rat)).